The chain runs to 49 residues: Small, acid-soluble spore protein O (49 aa).

The interval 1 to 49 is disordered; that stretch reads MGKRKANHTISGMNVASAQGQGTGYNEEFANEPLTPAERQNNKKRKKNQ. The segment covering 8–20 has biased composition (polar residues); the sequence is HTISGMNVASAQG.

The protein belongs to the SspO family.

The protein localises to the spore core. The protein is Small, acid-soluble spore protein O of Bacillus cereus (strain G9842).